The chain runs to 361 residues: FK506-binding protein 39 kDa (361 aa).

The interval 122 to 256 (LVDEEDEEEE…PSSPKTRTLK (135 aa)) is disordered. The span at 123 to 174 (VDEEDEEEEESDEDYDLSPTEEDLVETVSGDEESEEESESEDNSASEEDELD) shows a compositional bias: acidic residues. Ser192 carries the phosphoserine modification. Basic and acidic residues predominate over residues 208 to 227 (QKVEGTPVKEKKVAFAEKLE). Thr213 is subject to Phosphothreonine. The span at 241-252 (QASSNAPSSPKT) shows a compositional bias: polar residues. Ser249 bears the Phosphoserine mark. The region spanning 275–361 (GKKVEMRYIG…VFEVKLVRVH (87 aa)) is the PPIase FKBP-type domain.

This sequence belongs to the FKBP-type PPIase family. FKBP3/4 subfamily.

Its subcellular location is the nucleus. It localises to the nucleolus. The enzyme catalyses [protein]-peptidylproline (omega=180) = [protein]-peptidylproline (omega=0). Its function is as follows. PPIase that acts as a histone chaperone. Histone proline isomerase that increases the rate of cis-trans isomerization at prolines on the histone H3 N-terminal tail. Proline isomerization influences H3 methylation thereby regulating gene expression. The polypeptide is FK506-binding protein 39 kDa (Schizosaccharomyces pombe (strain 972 / ATCC 24843) (Fission yeast)).